We begin with the raw amino-acid sequence, 485 residues long: Probable cytosol aminopeptidase (485 aa).

The Mn(2+) site is built by lysine 251 and aspartate 256. Residue lysine 263 is part of the active site. Mn(2+)-binding residues include aspartate 274, aspartate 333, and glutamate 335. The active site involves arginine 337.

Belongs to the peptidase M17 family. Requires Mn(2+) as cofactor.

It is found in the cytoplasm. It catalyses the reaction Release of an N-terminal amino acid, Xaa-|-Yaa-, in which Xaa is preferably Leu, but may be other amino acids including Pro although not Arg or Lys, and Yaa may be Pro. Amino acid amides and methyl esters are also readily hydrolyzed, but rates on arylamides are exceedingly low.. It carries out the reaction Release of an N-terminal amino acid, preferentially leucine, but not glutamic or aspartic acids.. Functionally, presumably involved in the processing and regular turnover of intracellular proteins. Catalyzes the removal of unsubstituted N-terminal amino acids from various peptides. In Brucella melitensis biotype 1 (strain ATCC 23456 / CCUG 17765 / NCTC 10094 / 16M), this protein is Probable cytosol aminopeptidase.